The primary structure comprises 137 residues: uncharacterized protein (137 aa).

This is an uncharacterized protein from Escherichia coli (strain K12).